Here is a 201-residue protein sequence, read N- to C-terminus: Large ribosomal subunit protein uL4 (201 aa).

The disordered stretch occupies residues 39–72 (KRQGTSAQKSRSEVIGSGKKPWRQKGTGRARAGS).

Belongs to the universal ribosomal protein uL4 family. Part of the 50S ribosomal subunit.

In terms of biological role, one of the primary rRNA binding proteins, this protein initially binds near the 5'-end of the 23S rRNA. It is important during the early stages of 50S assembly. It makes multiple contacts with different domains of the 23S rRNA in the assembled 50S subunit and ribosome. Its function is as follows. Forms part of the polypeptide exit tunnel. This chain is Large ribosomal subunit protein uL4, found in Wigglesworthia glossinidia brevipalpis.